Consider the following 477-residue polypeptide: Cytochrome c-552 (477 aa).

An N-terminal signal peptide occupies residues 1–26 (MVRISTSISYLWGMVASLFLMMPAYS). H94 provides a ligand contact to heme c. C122, C125, and K126 together coordinate heme. The heme c site is built by C160, C163, H164, C209, C212, and H213. E215, Y216, K261, and Q263 together coordinate Ca(2+). Residue Y216 coordinates substrate. Residue H264 coordinates substrate. Heme c-binding residues include H275, C282, C285, H286, H301, C314, C317, H318, and H393.

Belongs to the cytochrome c-552 family. Ca(2+) is required as a cofactor. Heme c serves as cofactor.

The protein resides in the periplasm. The enzyme catalyses 6 Fe(III)-[cytochrome c] + NH4(+) + 2 H2O = 6 Fe(II)-[cytochrome c] + nitrite + 8 H(+). It functions in the pathway nitrogen metabolism; nitrate reduction (assimilation). Functionally, catalyzes the reduction of nitrite to ammonia, consuming six electrons in the process. The protein is Cytochrome c-552 of Pectobacterium carotovorum subsp. carotovorum (strain PC1).